Reading from the N-terminus, the 100-residue chain is Serine protease inhibitor 1 protein (100 aa).

The N-terminal stretch at 1–20 (MKHLLIVSLVFVTIIWKIEC) is a signal peptide. Intrachain disulfides connect Cys42/Cys74, Cys51/Cys69, Cys54/Cys65, Cys58/Cys93, and Cys76/Cys90. The region spanning 42–93 (CGLNEVWMVCSSCEEECGKTPQPCPRICQPARCQCPAHKGYRRDGQGNCIFC) is the TIL domain.

Its subcellular location is the secreted. In Caenorhabditis elegans, this protein is Serine protease inhibitor 1 protein.